Here is a 166-residue protein sequence, read N- to C-terminus: Putative universal stress protein SE_1385 (166 aa).

The protein belongs to the universal stress protein A family.

It is found in the cytoplasm. The polypeptide is Putative universal stress protein SE_1385 (Staphylococcus epidermidis (strain ATCC 12228 / FDA PCI 1200)).